We begin with the raw amino-acid sequence, 179 residues long: MARLQAIYRDKLVPELIRQFGYSSPMQVPRLSKITLNMGVSEAVSDKKVMDSAVADLTRIAGQKPVVTKAKKAIAGFKIREGQAIGCMVTLRGVQMYEFLDRFVTVALPRVRDFRGISGRSFDGRGNYNVGVKEQIIFPEIEYDKVDALRGLNVSITTTARTDEEAKALLAGFRFPFKN.

The protein belongs to the universal ribosomal protein uL5 family. As to quaternary structure, part of the 50S ribosomal subunit; part of the 5S rRNA/L5/L18/L25 subcomplex. Contacts the 5S rRNA and the P site tRNA. Forms a bridge to the 30S subunit in the 70S ribosome.

Its function is as follows. This is one of the proteins that bind and probably mediate the attachment of the 5S RNA into the large ribosomal subunit, where it forms part of the central protuberance. In the 70S ribosome it contacts protein S13 of the 30S subunit (bridge B1b), connecting the 2 subunits; this bridge is implicated in subunit movement. Contacts the P site tRNA; the 5S rRNA and some of its associated proteins might help stabilize positioning of ribosome-bound tRNAs. The protein is Large ribosomal subunit protein uL5 of Verminephrobacter eiseniae (strain EF01-2).